A 297-amino-acid chain; its full sequence is Protease HtpX homolog (297 aa).

The next 2 membrane-spanning stretches (helical) occupy residues 14-34 (VILL…AGYL) and 39-59 (YQLG…SMIF). Histidine 143 contributes to the Zn(2+) binding site. Glutamate 144 is an active-site residue. Zn(2+) is bound at residue histidine 147. Helical transmembrane passes span 158-178 (IAVA…RMMW) and 193-213 (GFGA…PLAA). Glutamate 225 is a binding site for Zn(2+).

The protein belongs to the peptidase M48B family. Zn(2+) is required as a cofactor.

It localises to the cell membrane. The sequence is that of Protease HtpX homolog from Streptococcus equi subsp. zooepidemicus (strain MGCS10565).